We begin with the raw amino-acid sequence, 290 residues long: Fructokinase (290 aa).

An ATP-binding site is contributed by threonine 130. Zn(2+)-binding residues include histidine 153, cysteine 169, histidine 172, and cysteine 175. Residues proline 183 and 231–235 (GVMEK) each bind ATP.

The protein belongs to the ROK (NagC/XylR) family. As to quaternary structure, homodimer. It depends on Mg(2+) as a cofactor.

The enzyme catalyses D-fructose + ATP = D-fructose 6-phosphate + ADP + H(+). Its activity is regulated as follows. Inactivated by EDTA. Inhibition by zinc ions (Potential). The polypeptide is Fructokinase (scrK) (Lactococcus lactis subsp. cremoris (Streptococcus cremoris)).